A 297-amino-acid polypeptide reads, in one-letter code: uncharacterized protein (297 aa).

The tract at residues 267–297 is disordered; the sequence is NTQHAGKPGAQHRTRRSPPAFRRADRLRQSA. Over residues 288–297 the composition is skewed to basic and acidic residues; that stretch reads RRADRLRQSA.

This is an uncharacterized protein from Treponema pallidum (strain Nichols).